We begin with the raw amino-acid sequence, 276 residues long: Large ribosomal subunit protein uL2 (276 aa).

2 disordered regions span residues 30 to 57 (EKSL…QGGG) and 219 to 276 (TVRG…RSKK).

The protein belongs to the universal ribosomal protein uL2 family. As to quaternary structure, part of the 50S ribosomal subunit. Forms a bridge to the 30S subunit in the 70S ribosome.

Functionally, one of the primary rRNA binding proteins. Required for association of the 30S and 50S subunits to form the 70S ribosome, for tRNA binding and peptide bond formation. It has been suggested to have peptidyltransferase activity; this is somewhat controversial. Makes several contacts with the 16S rRNA in the 70S ribosome. This chain is Large ribosomal subunit protein uL2, found in Exiguobacterium sibiricum (strain DSM 17290 / CCUG 55495 / CIP 109462 / JCM 13490 / 255-15).